The chain runs to 303 residues: Methionyl-tRNA formyltransferase (303 aa).

110 to 113 (SLLP) is a binding site for (6S)-5,6,7,8-tetrahydrofolate.

This sequence belongs to the Fmt family.

It carries out the reaction L-methionyl-tRNA(fMet) + (6R)-10-formyltetrahydrofolate = N-formyl-L-methionyl-tRNA(fMet) + (6S)-5,6,7,8-tetrahydrofolate + H(+). Functionally, attaches a formyl group to the free amino group of methionyl-tRNA(fMet). The formyl group appears to play a dual role in the initiator identity of N-formylmethionyl-tRNA by promoting its recognition by IF2 and preventing the misappropriation of this tRNA by the elongation apparatus. The protein is Methionyl-tRNA formyltransferase of Campylobacter lari (strain RM2100 / D67 / ATCC BAA-1060).